The sequence spans 292 residues: Polyamine aminopropyltransferase 1 (292 aa).

A PABS domain is found at M1 to D244. Q35 is a binding site for S-methyl-5'-thioadenosine. 2 residues coordinate spermidine: H66 and E90. S-methyl-5'-thioadenosine is bound by residues D110 and D142–G143. Catalysis depends on D163, which acts as the Proton acceptor.

The protein belongs to the spermidine/spermine synthase family. Homodimer or homotetramer.

Its subcellular location is the cytoplasm. The catalysed reaction is norspermine + S-adenosyl 3-(methylsulfanyl)propylamine = caldopentamine + S-methyl-5'-thioadenosine + 2 H(+). The enzyme catalyses norspermidine + S-adenosyl 3-(methylsulfanyl)propylamine = norspermine + S-methyl-5'-thioadenosine + H(+). It catalyses the reaction S-adenosyl 3-(methylsulfanyl)propylamine + spermidine = thermospermine + S-methyl-5'-thioadenosine + H(+). Functionally, involved in the biosynthesis of polyamines which are thought to support the growth of thermophilic microorganisms under high-temperature conditions. It seems that long-chain and branched-chain of polyamines effectively stabilize DNA and RNA, respectively. Catalyzes the irreversible transfer of a propylamine group from the amino donor S-adenosylmethioninamine (decarboxy-AdoMet) to norspermidine, spermidine and norspermine to yield norspermine, thermospermine and caldopentamine, respectively. It can also synthesize sym-norspermidine (bis(3-aminopropyl)amine) from 1,3-diaminopropane with a very low activity. The biosynthesis of caldohexamine and caldoheptamine from caldopentamine has been also observed. The polypeptide is Polyamine aminopropyltransferase 1 (Hyperthermus butylicus (strain DSM 5456 / JCM 9403 / PLM1-5)).